The following is a 194-amino-acid chain: Isopentenyl-diphosphate Delta-isomerase (194 aa).

Residues His-27 and His-34 each contribute to the Mn(2+) site. The Nudix hydrolase domain occupies 32 to 166; sequence ALHLAFSCHV…PWAFSPWLTL (135 aa). The active site involves Cys-69. His-71 serves as a coordination point for Mn(2+). Position 89 (Glu-89) interacts with Mg(2+). Mn(2+) contacts are provided by Glu-116 and Glu-118. The active site involves Glu-118.

Belongs to the IPP isomerase type 1 family. The cofactor is Mg(2+). Mn(2+) serves as cofactor.

It is found in the cytoplasm. It carries out the reaction isopentenyl diphosphate = dimethylallyl diphosphate. The protein operates within isoprenoid biosynthesis; dimethylallyl diphosphate biosynthesis; dimethylallyl diphosphate from isopentenyl diphosphate: step 1/1. Catalyzes the 1,3-allylic rearrangement of the homoallylic substrate isopentenyl (IPP) to its highly electrophilic allylic isomer, dimethylallyl diphosphate (DMAPP). The polypeptide is Isopentenyl-diphosphate Delta-isomerase (Clavibacter michiganensis subsp. michiganensis (strain NCPPB 382)).